Consider the following 147-residue polypeptide: Large ribosomal subunit protein bL9 (147 aa).

This sequence belongs to the bacterial ribosomal protein bL9 family.

Binds to the 23S rRNA. The sequence is that of Large ribosomal subunit protein bL9 from Clostridium kluyveri (strain NBRC 12016).